Reading from the N-terminus, the 77-residue chain is Exodeoxyribonuclease 7 small subunit (77 aa).

It belongs to the XseB family. Heterooligomer composed of large and small subunits.

Its subcellular location is the cytoplasm. The catalysed reaction is Exonucleolytic cleavage in either 5'- to 3'- or 3'- to 5'-direction to yield nucleoside 5'-phosphates.. Its function is as follows. Bidirectionally degrades single-stranded DNA into large acid-insoluble oligonucleotides, which are then degraded further into small acid-soluble oligonucleotides. In Lysinibacillus sphaericus (strain C3-41), this protein is Exodeoxyribonuclease 7 small subunit.